Here is a 211-residue protein sequence, read N- to C-terminus: MTPWLGLVVLLGSWSLGDWGAEACTCSPSHPQDAFCNSDIVIRAKVVGKKLVKEGPFGTLVYTIKQMKMYRGFTKMPHVQYIHTEASESLCGLKLEVNKYQYLLTGRVYDGKMYTGLCNFVERWDQLTLSQRKGLNYRYHLGCNCKIKSCYYLPCYVTSKNECLWTDMLSNFGYPGYQSKHYACIRQKGGYCSWYRGWAPPDKSIINATDP.

An N-terminal signal peptide occupies residues 1-23 (MTPWLGLVVLLGSWSLGDWGAEA). Cys-24 serves as a coordination point for Zn(2+). 2 involved in metalloproteinase-binding regions span residues 24–27 (CTCS) and 88–89 (ES). Cystine bridges form between Cys-24–Cys-91, Cys-26–Cys-118, Cys-36–Cys-143, Cys-145–Cys-192, Cys-150–Cys-155, and Cys-163–Cys-184. Positions 24–143 (CTCSPSHPQD…GLNYRYHLGC (120 aa)) constitute an NTR domain. Positions 105 to 188 (TGRVYDGKMY…SKHYACIRQK (84 aa)) are mediates interaction with EFEMP1. Asn-207 carries N-linked (GlcNAc...) asparagine glycosylation.

Belongs to the protease inhibitor I35 (TIMP) family. In terms of assembly, interacts with EFEMP1. Interacts with KDR.

It localises to the secreted. The protein resides in the extracellular space. Its subcellular location is the extracellular matrix. Mediates a variety of processes including matrix regulation and turnover, inflammation, and angiogenesis, through reversible inhibition of zinc protease superfamily enzymes, primarily matrix metalloproteinases (MMPs). Regulates extracellular matrix (ECM) remodeling through inhibition of matrix metalloproteinases (MMP) including MMP-1, MMP-2, MMP-3, MMP-7, MMP-9, MMP-13, MMP-14 and MMP-15. Additionally, modulates the processing of amyloid precursor protein (APP) and apolipoprotein E receptor ApoER2 by inhibiting two alpha-secretases ADAM10 and ADAM17. Functions as a tumor suppressor and a potent inhibitor of angiogenesis. Exerts its anti-angiogenic effect by directly interacting with vascular endothelial growth factor (VEGF) receptor-2/KDR, preventing its binding to the VEGFA ligand. Selectively induces apoptosis in angiogenic endothelial cells through a caspase-independent cell death pathway. Mechanistically, inhibits matrix-induced focal adhesion kinase PTK2 tyrosine phosphorylation and association with paxillin/PXN and disrupts the incorporation of ITGB3, PTK2 and PXN into focal adhesion contacts on the matrix. In Equus caballus (Horse), this protein is Metalloproteinase inhibitor 3 (TIMP3).